A 376-amino-acid polypeptide reads, in one-letter code: MSNHIAFYVITTLCYHGKKTYKIGIHTGTLDDLLSRYATYFPDIIVMYFQYTNNAREVESKLKKNLTEYRITNIKGNLSEWIVMKYEKLFSLIKREINSDSDIIVDETCENRLFSKYVDKSISNKNQNTTENKIEQLIAIDLSKHKISELIQKQSSNKLNETEKLVLKKHFFMRDLGLNSKIKDKKLRELLNEYLDDRTAIRRYEILFGYHKETKKDNIFNEKEKAKISIIIDLVNRLIGKKYTKLTDNIFKNGSKQHIIIENKQYNKAISDIIDNSIYFKDEEKNRALFYSRPGRFKPATDKESRIAYAKRIQNLLNSYNINLKSFERKSKNGKRGFTYSLCVDEQIRDIVRNKYKSSLAVDDKHMKMLCNDYGN.

It belongs to the mimivirus R1 family.

This is an uncharacterized protein from Acanthamoeba polyphaga mimivirus (APMV).